Here is a 268-residue protein sequence, read N- to C-terminus: 4-diphosphocytidyl-2-C-methyl-D-erythritol kinase (268 aa).

K10 is a catalytic residue. 101 to 111 (PTQAGLGGGST) lines the ATP pocket. D143 is a catalytic residue.

It belongs to the GHMP kinase family. IspE subfamily.

The catalysed reaction is 4-CDP-2-C-methyl-D-erythritol + ATP = 4-CDP-2-C-methyl-D-erythritol 2-phosphate + ADP + H(+). It participates in isoprenoid biosynthesis; isopentenyl diphosphate biosynthesis via DXP pathway; isopentenyl diphosphate from 1-deoxy-D-xylulose 5-phosphate: step 3/6. In terms of biological role, catalyzes the phosphorylation of the position 2 hydroxy group of 4-diphosphocytidyl-2C-methyl-D-erythritol. This is 4-diphosphocytidyl-2-C-methyl-D-erythritol kinase from Helicobacter pylori (strain ATCC 700392 / 26695) (Campylobacter pylori).